The primary structure comprises 866 residues: Sphingomyelin phosphodiesterase 4 (866 aa).

Phosphoserine is present on residues Ser169 and Ser285. A Phosphothreonine modification is found at Thr708. At Ser792 the chain carries Phosphoserine. A helical membrane pass occupies residues 822-842; the sequence is LLLAFFVASLFCVGPLPCTLL.

Requires Mg(2+) as cofactor. Widely expressed, with highest levels in heart and skeletal muscle. As to expression, expressed in skeletal muscle (at protein level). In terms of tissue distribution, expressed in skeletal muscle but a lower levels than isoform 1 (at protein level).

It is found in the endoplasmic reticulum membrane. The protein resides in the golgi apparatus membrane. The protein localises to the nucleus envelope. It localises to the cell membrane. Its subcellular location is the sarcolemma. It catalyses the reaction a sphingomyelin + H2O = phosphocholine + an N-acylsphing-4-enine + H(+). Activated by phosphatidylserine and tumor necrosis factor (TNF). Inhibited by scyphostatin. Its function is as follows. Catalyzes the hydrolysis of membrane sphingomyelin to form phosphorylcholine and ceramide. It has a relevant role in the homeostasis of membrane sphingolipids, thereby influencing membrane integrity, and endoplasmic reticulum organization and function. May sensitize cells to DNA damage-induced apoptosis. In skeletal muscle, mediates TNF-stimulated oxidant production. The polypeptide is Sphingomyelin phosphodiesterase 4 (Homo sapiens (Human)).